A 117-amino-acid chain; its full sequence is Immunoglobulin lambda variable 1-44 (117 aa).

A signal peptide spans 1–19; that stretch reads MASFPLLLTLLTHCAGSWA. Q20 bears the Pyrrolidone carboxylic acid mark. Residues 20–44 are framework-1; that stretch reads QSVLTQPPSASGTPGQRVTISCSGS. The Ig-like domain maps to 20–117; sequence QSVLTQPPSA…CAAWDDSLNG (98 aa). Residues 24-35 are compositionally biased toward polar residues; the sequence is TQPPSASGTPGQ. The segment at 24-45 is disordered; sequence TQPPSASGTPGQRVTISCSGSS. C41 and C108 are joined by a disulfide. The tract at residues 45-52 is complementarity-determining-1; it reads SSNIGSNT. The tract at residues 53–69 is framework-2; sequence VNWYQQLPGTAPKLLIY. Positions 70-72 are complementarity-determining-2; it reads SNN. The interval 73–108 is framework-3; that stretch reads QRPSGVPDRFSGSKSGTSASLAISGLQSEDEADYYC. Residues 109 to 117 form a complementarity-determining-3 region; it reads AAWDDSLNG.

In terms of assembly, immunoglobulins are composed of two identical heavy chains and two identical light chains; disulfide-linked.

The protein localises to the secreted. Its subcellular location is the cell membrane. Functionally, v region of the variable domain of immunoglobulin light chains that participates in the antigen recognition. Immunoglobulins, also known as antibodies, are membrane-bound or secreted glycoproteins produced by B lymphocytes. In the recognition phase of humoral immunity, the membrane-bound immunoglobulins serve as receptors which, upon binding of a specific antigen, trigger the clonal expansion and differentiation of B lymphocytes into immunoglobulins-secreting plasma cells. Secreted immunoglobulins mediate the effector phase of humoral immunity, which results in the elimination of bound antigens. The antigen binding site is formed by the variable domain of one heavy chain, together with that of its associated light chain. Thus, each immunoglobulin has two antigen binding sites with remarkable affinity for a particular antigen. The variable domains are assembled by a process called V-(D)-J rearrangement and can then be subjected to somatic hypermutations which, after exposure to antigen and selection, allow affinity maturation for a particular antigen. In Homo sapiens (Human), this protein is Immunoglobulin lambda variable 1-44.